The primary structure comprises 495 residues: Glutamate--tRNA ligase (495 aa).

The short motif at 13-23 (PSPTGTPHVGL) is the 'HIGH' region element. The 'KMSKS' region signature appears at 257–261 (KLSKR). K260 is an ATP binding site.

The protein belongs to the class-I aminoacyl-tRNA synthetase family. Glutamate--tRNA ligase type 1 subfamily. As to quaternary structure, monomer.

The protein localises to the cytoplasm. It catalyses the reaction tRNA(Glu) + L-glutamate + ATP = L-glutamyl-tRNA(Glu) + AMP + diphosphate. Catalyzes the attachment of glutamate to tRNA(Glu) in a two-step reaction: glutamate is first activated by ATP to form Glu-AMP and then transferred to the acceptor end of tRNA(Glu). The protein is Glutamate--tRNA ligase of Mycolicibacterium vanbaalenii (strain DSM 7251 / JCM 13017 / BCRC 16820 / KCTC 9966 / NRRL B-24157 / PYR-1) (Mycobacterium vanbaalenii).